The chain runs to 172 residues: MFDAFTKVVAQADARGQFISTSEIDALAAMVSDSNKRLDAVNRISSNASTIVASAARQLFAQQPALIAPGGNAYTSRRMAACLRDMEIILRYVTYSAFTGDASVMEDRCLNGLRETYLALGTPGASVAAGVNLMKDAALAIINDKAGISAGDCASLSSEIGTYFDRAAASVA.

Residue Asn72 is modified to N4-methylasparagine. Cys82 serves as a coordination point for (2R,3E)-phycocyanobilin. Position 153 (Cys153) interacts with (2R,3E)-phycoerythrobilin.

This sequence belongs to the phycobiliprotein family. In terms of assembly, heterodimer of an alpha and a beta chain. Post-translationally, contains two covalently linked bilin chromophores.

It localises to the cellular thylakoid membrane. In terms of biological role, light-harvesting photosynthetic bile pigment-protein from the phycobiliprotein complex. This is R-phycocyanin-2 beta chain (rpcB) from Synechococcus sp. (strain WH8103).